The primary structure comprises 883 residues: Puromycin-sensitive aminopeptidase (883 aa).

Substrate contacts are provided by residues Glu-125 and 265–269 (GAMEN). His-301 provides a ligand contact to Zn(2+). Glu-302 acts as the Proton acceptor in catalysis. Residues His-305 and Glu-324 each contribute to the Zn(2+) site.

It belongs to the peptidase M1 family. Requires Zn(2+) as cofactor.

The enzyme catalyses Release of an N-terminal amino acid, preferentially alanine, from a wide range of peptides, amides and arylamides.. Its activity is regulated as follows. Strongly inhibited by puromycin and DAMPAQ-22. In terms of biological role, aminopeptidase with broad substrate specificity for several peptides. Involved in proteolytic events essential for cell growth and viability. Plays an essential role during prophase I of meiosis. Required for correct meiotic reconbination in both male and female gametophytes. This is Puromycin-sensitive aminopeptidase (MPA1) from Arabidopsis thaliana (Mouse-ear cress).